A 695-amino-acid polypeptide reads, in one-letter code: Zinc finger SWIM domain-containing protein 3 (695 aa).

The interval 434–490 (NAPKLRRTRLPSTPPRPKKPFRICGGGDTRLPVEEVEETKADSAQSQLPQPQDQSSK) is disordered. Over residues 475-489 (DSAQSQLPQPQDQSS) the composition is skewed to low complexity. The SWIM-type zinc-finger motif lies at 530–571 (VAVQLLENSHQVSKDGCSCSCSFQQCYHLPCRHILALLHTSQ).

The polypeptide is Zinc finger SWIM domain-containing protein 3 (Zswim3) (Mus musculus (Mouse)).